The sequence spans 496 residues: Cytochrome P450 monooxygenase claT (496 aa).

A helical transmembrane segment spans residues Leu-2 to Val-22. Residue Cys-423 participates in heme binding.

It belongs to the cytochrome P450 family. The cofactor is heme.

The protein localises to the membrane. The catalysed reaction is wigandol + 4 reduced [NADPH--hemoprotein reductase] + 4 O2 = arnebinol A + 4 oxidized [NADPH--hemoprotein reductase] + 6 H2O + 4 H(+). It catalyses the reaction arnebinol A + reduced [NADPH--hemoprotein reductase] + O2 = clavilactone A + oxidized [NADPH--hemoprotein reductase] + H2O + H(+). The enzyme catalyses (2E)-geranylhydroquinone + reduced [NADPH--hemoprotein reductase] + O2 = isoalliodorol + oxidized [NADPH--hemoprotein reductase] + H2O + H(+). The protein operates within secondary metabolite biosynthesis; terpenoid biosynthesis. In terms of biological role, cytochrome P450 monooxygenase; part of the gene cluster that mediates the biosynthesis of clavilactone A, a meroterpenoid that features a unique benzo-fused ten-membered carbocyclic ring unit with an alpha,beta-epoxy-gamma-lactone moiety, forming an intriguing 10/5/3 tricyclic nested skeleton. ClaR, ClaS and ClaT are sufficient to produce clavilactone A. Within the pathway, claT acts as a multifunctional cytochrome P450 monooxygenase that catalyzes a ten-electron oxidation to accomplish the biosynthesis of the 10/5/3 tricyclic nested skeleton in clavilactones. The biosynthesis begins with the prenyltransferase claS that transfers geranyl pyrophosphate (GPP) to hydroquinone to produces geranylhydroquinone. The cytochrome P450 monooxygenase claR then catalyzes the diradical coupling reaction between the intramolecular hydroquinone and allyl moieties to form the benzo-fused ten-membered carbocyclic ring unit of wigantol. Finally the cytochrome P450 monooxygenase claT exquisitely and stereoselectively assembles the alpha,beta-epoxy-gamma-lactone moiety, producing clavilactone A via arnebinol A. In Ampulloclitocybe clavipes (Club foot), this protein is Cytochrome P450 monooxygenase claT.